Reading from the N-terminus, the 191-residue chain is Recombination protein RecR (191 aa).

The C4-type zinc-finger motif lies at 51–66 (CQTCFHLSADPECEIC). The region spanning 74-168 (GVICVVADSR…SVSRIAYGLP (95 aa)) is the Toprim domain.

The protein belongs to the RecR family.

Functionally, may play a role in DNA repair. It seems to be involved in an RecBC-independent recombinational process of DNA repair. It may act with RecF and RecO. This chain is Recombination protein RecR, found in Synechococcus sp. (strain CC9605).